The sequence spans 418 residues: Tryptophan synthase beta chain 1 (418 aa).

Lys-99 is modified (N6-(pyridoxal phosphate)lysine).

It belongs to the TrpB family. In terms of assembly, tetramer of two alpha and two beta chains. Pyridoxal 5'-phosphate is required as a cofactor.

The catalysed reaction is (1S,2R)-1-C-(indol-3-yl)glycerol 3-phosphate + L-serine = D-glyceraldehyde 3-phosphate + L-tryptophan + H2O. It functions in the pathway amino-acid biosynthesis; L-tryptophan biosynthesis; L-tryptophan from chorismate: step 5/5. Its function is as follows. The beta subunit is responsible for the synthesis of L-tryptophan from indole and L-serine. The sequence is that of Tryptophan synthase beta chain 1 (trpB1) from Corynebacterium efficiens (strain DSM 44549 / YS-314 / AJ 12310 / JCM 11189 / NBRC 100395).